Consider the following 308-residue polypeptide: 11-beta-hydroxysteroid dehydrogenase-like 2 (308 aa).

A helical; Signal-anchor for type II membrane protein membrane pass occupies residues phenylalanine 10 to threonine 30. Residues glycine 53–arginine 79 and aspartate 104 contribute to the NADP(+) site. Serine 183 lines the substrate pocket. Tyrosine 196 (proton acceptor) is an active-site residue. NADP(+) contacts are provided by residues tyrosine 196–lysine 200 and lysine 200.

It belongs to the short-chain dehydrogenases/reductases (SDR) family.

The protein resides in the membrane. The chain is 11-beta-hydroxysteroid dehydrogenase-like 2 (HSD2) from Arabidopsis thaliana (Mouse-ear cress).